A 141-amino-acid polypeptide reads, in one-letter code: ATP synthase epsilon chain (141 aa).

It belongs to the ATPase epsilon chain family. F-type ATPases have 2 components, CF(1) - the catalytic core - and CF(0) - the membrane proton channel. CF(1) has five subunits: alpha(3), beta(3), gamma(1), delta(1), epsilon(1). CF(0) has three main subunits: a, b and c.

It is found in the cell inner membrane. Functionally, produces ATP from ADP in the presence of a proton gradient across the membrane. This is ATP synthase epsilon chain from Desulfatibacillum aliphaticivorans.